The sequence spans 196 residues: Segregation and condensation protein B (196 aa).

This sequence belongs to the ScpB family. In terms of assembly, homodimer. Homodimerization may be required to stabilize the binding of ScpA to the Smc head domains. Component of a cohesin-like complex composed of ScpA, ScpB and the Smc homodimer, in which ScpA and ScpB bind to the head domain of Smc. The presence of the three proteins is required for the association of the complex with DNA.

It localises to the cytoplasm. Functionally, participates in chromosomal partition during cell division. May act via the formation of a condensin-like complex containing Smc and ScpA that pull DNA away from mid-cell into both cell halves. The sequence is that of Segregation and condensation protein B from Lactobacillus johnsonii (strain CNCM I-12250 / La1 / NCC 533).